The chain runs to 122 residues: Large ribosomal subunit protein uL14 (122 aa).

This sequence belongs to the universal ribosomal protein uL14 family. Part of the 50S ribosomal subunit. Forms a cluster with proteins L3 and L19. In the 70S ribosome, L14 and L19 interact and together make contacts with the 16S rRNA in bridges B5 and B8.

In terms of biological role, binds to 23S rRNA. Forms part of two intersubunit bridges in the 70S ribosome. This is Large ribosomal subunit protein uL14 from Borrelia hermsii (strain HS1 / DAH).